Reading from the N-terminus, the 485-residue chain is Protein DETOXIFICATION 8 (485 aa).

The disordered stretch occupies residues 1 to 26; the sequence is MENGFSLVPKEEEEEEDYSNEKSEDQ. The next 12 helical transmembrane spans lie at 41 to 61, 74 to 94, 118 to 138, 159 to 179, 188 to 208, 212 to 232, 263 to 283, 297 to 317, 338 to 358, 381 to 401, 414 to 434, and 442 to 462; these read FMAA…VISI, AVAI…FGLA, YGSM…WVFM, SIWL…TRFF, LFLS…LLVY, FGIV…VGLL, LAIP…LLIL, VLSI…AIGA, AANS…ISLY, ITPF…LSGV, ANIG…CFVV, and WIGI…VTFF.

Belongs to the multi antimicrobial extrusion (MATE) (TC 2.A.66.1) family.

The protein resides in the membrane. The polypeptide is Protein DETOXIFICATION 8 (Arabidopsis thaliana (Mouse-ear cress)).